A 235-amino-acid chain; its full sequence is Ribosomal RNA small subunit methyltransferase G (235 aa).

S-adenosyl-L-methionine contacts are provided by residues Gly-74, Leu-79, 124–125 (AE), and Arg-142. The disordered stretch occupies residues 211 to 235 (RRRAAKPGRNKSGRTARSRGRTGRR). A compositionally biased stretch (basic residues) spans 213–235 (RAAKPGRNKSGRTARSRGRTGRR).

Belongs to the methyltransferase superfamily. RNA methyltransferase RsmG family.

Its subcellular location is the cytoplasm. Functionally, specifically methylates the N7 position of guanine in position 518 of 16S rRNA. This Mycolicibacterium smegmatis (strain ATCC 700084 / mc(2)155) (Mycobacterium smegmatis) protein is Ribosomal RNA small subunit methyltransferase G.